A 115-amino-acid polypeptide reads, in one-letter code: NADH-ubiquinone oxidoreductase chain 3 (115 aa).

The next 3 membrane-spanning stretches (helical) occupy residues 4–24 (IMAM…AFWL), 55–75 (FFLV…LLPL), and 84–104 (MFLT…GLAY).

This sequence belongs to the complex I subunit 3 family. Core subunit of respiratory chain NADH dehydrogenase (Complex I) which is composed of 45 different subunits. Interacts with TMEM186. Interacts with TMEM242.

It localises to the mitochondrion inner membrane. It carries out the reaction a ubiquinone + NADH + 5 H(+)(in) = a ubiquinol + NAD(+) + 4 H(+)(out). Functionally, core subunit of the mitochondrial membrane respiratory chain NADH dehydrogenase (Complex I) which catalyzes electron transfer from NADH through the respiratory chain, using ubiquinone as an electron acceptor. Essential for the catalytic activity of complex I. This is NADH-ubiquinone oxidoreductase chain 3 from Phyllotis darwinii (Darwin's leaf-eared mouse).